The following is a 503-amino-acid chain: Glutamate/gamma-aminobutyrate antiporter (503 aa).

33–43 (LHLVFFLLLGG) lines the L-glutamate pocket. The next 7 membrane-spanning stretches (helical) occupy residues 35–55 (LVFF…LCAA), 153–173 (FVVG…AYFI), 194–214 (VSTL…EASA), 232–252 (ILLV…VAAV), 366–386 (LTVV…FVLI), 407–427 (IIAG…FVPP), and 440–460 (MILL…YELH).

The protein belongs to the amino acid-polyamine-organocation (APC) superfamily. Glutamate:GABA antiporter (GGA) (TC 2.A.3.7) family.

Its subcellular location is the cell membrane. It catalyses the reaction 4-aminobutanoate(in) + L-glutamate(out) = 4-aminobutanoate(out) + L-glutamate(in). In terms of biological role, involved in glutaminase-dependent acid resistance. Exchanges extracellular glutamate (Glu) for intracellular gamma-aminobutyric acid (GABA) under acidic conditions. This is Glutamate/gamma-aminobutyrate antiporter from Lactococcus lactis subsp. cremoris (strain MG1363).